The chain runs to 294 residues: Acetyl-coenzyme A carboxylase carboxyl transferase subunit beta (294 aa).

The 265-residue stretch at 30–294 (IMTKCPECKK…PEAGGESDGE (265 aa)) folds into the CoA carboxyltransferase N-terminal domain. Zn(2+) contacts are provided by C34, C37, C53, and C56. The C4-type zinc finger occupies 34 to 56 (CPECKKIMYTKELQKNLMVCNYC).

Belongs to the AccD/PCCB family. In terms of assembly, acetyl-CoA carboxylase is a heterohexamer composed of biotin carboxyl carrier protein (AccB), biotin carboxylase (AccC) and two subunits each of ACCase subunit alpha (AccA) and ACCase subunit beta (AccD). Requires Zn(2+) as cofactor.

Its subcellular location is the cytoplasm. The enzyme catalyses N(6)-carboxybiotinyl-L-lysyl-[protein] + acetyl-CoA = N(6)-biotinyl-L-lysyl-[protein] + malonyl-CoA. It functions in the pathway lipid metabolism; malonyl-CoA biosynthesis; malonyl-CoA from acetyl-CoA: step 1/1. Functionally, component of the acetyl coenzyme A carboxylase (ACC) complex. Biotin carboxylase (BC) catalyzes the carboxylation of biotin on its carrier protein (BCCP) and then the CO(2) group is transferred by the transcarboxylase to acetyl-CoA to form malonyl-CoA. The chain is Acetyl-coenzyme A carboxylase carboxyl transferase subunit beta from Listeria innocua serovar 6a (strain ATCC BAA-680 / CLIP 11262).